The sequence spans 507 residues: Glutamate--tRNA ligase (507 aa).

The short motif at 14-24 (PSPTGPLHIGG) is the 'HIGH' region element. The 'KMSKS' region motif lies at 262–266 (KLSKR). An ATP-binding site is contributed by Lys265.

This sequence belongs to the class-I aminoacyl-tRNA synthetase family. Glutamate--tRNA ligase type 1 subfamily. Monomer.

It is found in the cytoplasm. It carries out the reaction tRNA(Glu) + L-glutamate + ATP = L-glutamyl-tRNA(Glu) + AMP + diphosphate. Functionally, catalyzes the attachment of glutamate to tRNA(Glu) in a two-step reaction: glutamate is first activated by ATP to form Glu-AMP and then transferred to the acceptor end of tRNA(Glu). The chain is Glutamate--tRNA ligase from Porphyromonas gingivalis (strain ATCC 33277 / DSM 20709 / CIP 103683 / JCM 12257 / NCTC 11834 / 2561).